The primary structure comprises 210 residues: Protein-methionine-sulfoxide reductase heme-binding subunit MsrQ (210 aa).

6 helical membrane-spanning segments follow: residues 8–28 (LAVF…AWIF), 37–57 (VLVE…LAMT), 75–95 (LGLW…LFIL), 110–130 (PYII…VTSN), 147–167 (LVYV…RADL), and 169–189 (EWAL…PMIA).

Belongs to the MsrQ family. As to quaternary structure, heterodimer of a catalytic subunit (MsrP) and a heme-binding subunit (MsrQ). FMN serves as cofactor. It depends on heme b as a cofactor.

Its subcellular location is the cell inner membrane. Part of the MsrPQ system that repairs oxidized periplasmic proteins containing methionine sulfoxide residues (Met-O), using respiratory chain electrons. Thus protects these proteins from oxidative-stress damage caused by reactive species of oxygen and chlorine generated by the host defense mechanisms. MsrPQ is essential for the maintenance of envelope integrity under bleach stress, rescuing a wide series of structurally unrelated periplasmic proteins from methionine oxidation. MsrQ provides electrons for reduction to the reductase catalytic subunit MsrP, using the quinone pool of the respiratory chain. In Pseudomonas syringae pv. tomato (strain ATCC BAA-871 / DC3000), this protein is Protein-methionine-sulfoxide reductase heme-binding subunit MsrQ.